Reading from the N-terminus, the 439-residue chain is MKLANWYWLSSAVLATYGFLVVANNETEEIKDERAKDVCPVRLESRGKCEEAGECPYQVSLPPLTIQLPKQFSRIEEVFKEVQNLKEIVNSLKKSCQDCKLQADDNGDPGRNGLLLPSTGAPGEVGDNRVRELESEVNKLSSELKNAKEEINVLHGRLEKLNLVNMNNIENYVDSKVANLTFVVNSLDGKCSKCPSQEQIQSRPVQHLIYKDCSDYYAIGKRSSETYRVTPDPKNSSFEVYCDMETMGGGWTVLQARLDGSTNFTRTWQDYKAGFGNLRREFWLGNDKIHLLTKSKEMILRIDLEDFNGVELYALYDQFYVANEFLKYRLHVGNYNGTAGDALRFNKHYNHDLKFFTTPDKDNDRYPSGNCGLYYSSGWWFDACLSANLNGKYYHQKYRGVRNGIFWGTWPGVSEAHPGGYKSSFKEAKMMIRPKHFKP.

The N-terminal stretch at 1–23 (MKLANWYWLSSAVLATYGFLVVA) is a signal peptide. N-linked (GlcNAc...) asparagine glycosylation is present at asparagine 25. The stretch at 73-165 (SRIEEVFKEV…GRLEKLNLVN (93 aa)) forms a coiled coil. The segment at 103 to 126 (ADDNGDPGRNGLLLPSTGAPGEVG) is disordered. Residues asparagine 179, asparagine 235, asparagine 263, and asparagine 336 are each glycosylated (N-linked (GlcNAc...) asparagine). A Fibrinogen C-terminal domain is found at 204 to 436 (PVQHLIYKDC…EAKMMIRPKH (233 aa)). The cysteines at positions 213 and 242 are disulfide-linked. A disulfide bridge links cysteine 371 with cysteine 384.

As to quaternary structure, homotetramer; disulfide-linked. In terms of tissue distribution, constitutively expressed in cytotoxic T-cells.

The protein resides in the secreted. May play a role in physiologic lymphocyte functions at mucosal sites. The polypeptide is Fibroleukin (FGL2) (Homo sapiens (Human)).